The primary structure comprises 587 residues: Aspartate--tRNA ligase (587 aa).

Residue glutamate 174 participates in L-aspartate binding. The interval glutamine 198 to lysine 201 is aspartate. Arginine 220 is a binding site for L-aspartate. ATP contacts are provided by residues arginine 220–glutamate 222 and glutamine 229. Residue histidine 443 participates in L-aspartate binding. Glutamate 477 contributes to the ATP binding site. Arginine 484 is an L-aspartate binding site. Residue glycine 529 to arginine 532 coordinates ATP.

The protein belongs to the class-II aminoacyl-tRNA synthetase family. Type 1 subfamily. As to quaternary structure, homodimer.

The protein resides in the cytoplasm. The catalysed reaction is tRNA(Asp) + L-aspartate + ATP = L-aspartyl-tRNA(Asp) + AMP + diphosphate. Catalyzes the attachment of L-aspartate to tRNA(Asp) in a two-step reaction: L-aspartate is first activated by ATP to form Asp-AMP and then transferred to the acceptor end of tRNA(Asp). The polypeptide is Aspartate--tRNA ligase (Streptococcus pneumoniae (strain Taiwan19F-14)).